The primary structure comprises 415 residues: Lipid-A-disaccharide synthase (415 aa).

The tract at residues 1–21 (MNSLPESGSDGQSSADPSQKA) is disordered.

Belongs to the LpxB family.

The catalysed reaction is a lipid X + a UDP-2-N,3-O-bis[(3R)-3-hydroxyacyl]-alpha-D-glucosamine = a lipid A disaccharide + UDP + H(+). It functions in the pathway bacterial outer membrane biogenesis; LPS lipid A biosynthesis. Its function is as follows. Condensation of UDP-2,3-diacylglucosamine and 2,3-diacylglucosamine-1-phosphate to form lipid A disaccharide, a precursor of lipid A, a phosphorylated glycolipid that anchors the lipopolysaccharide to the outer membrane of the cell. This Gluconobacter oxydans (strain 621H) (Gluconobacter suboxydans) protein is Lipid-A-disaccharide synthase.